Here is a 291-residue protein sequence, read N- to C-terminus: ATP synthase gamma chain (291 aa).

The protein belongs to the ATPase gamma chain family. As to quaternary structure, F-type ATPases have 2 components, CF(1) - the catalytic core - and CF(0) - the membrane proton channel. CF(1) has five subunits: alpha(3), beta(3), gamma(1), delta(1), epsilon(1). CF(0) has three main subunits: a, b and c.

The protein resides in the cell inner membrane. In terms of biological role, produces ATP from ADP in the presence of a proton gradient across the membrane. The gamma chain is believed to be important in regulating ATPase activity and the flow of protons through the CF(0) complex. In Neisseria gonorrhoeae (strain ATCC 700825 / FA 1090), this protein is ATP synthase gamma chain.